We begin with the raw amino-acid sequence, 134 residues long: Profilin-1 (134 aa).

The cysteines at positions 13 and 118 are disulfide-linked. The Involved in PIP2 interaction signature appears at alanine 84–threonine 100. A Phosphothreonine modification is found at threonine 114.

It belongs to the profilin family. Occurs in many kinds of cells as a complex with monomeric actin in a 1:1 ratio. In terms of processing, phosphorylated by MAP kinases.

The protein resides in the cytoplasm. Its subcellular location is the cytoskeleton. In terms of biological role, binds to actin and affects the structure of the cytoskeleton. At high concentrations, profilin prevents the polymerization of actin, whereas it enhances it at low concentrations. This is Profilin-1 from Olea europaea (Common olive).